The sequence spans 181 residues: Lectin beta-1 and beta-2 chains (181 aa).

Residues glutamate 119 and aspartate 121 each contribute to the Mn(2+) site. Residues aspartate 121, phenylalanine 123, asparagine 125, and aspartate 129 each contribute to the Ca(2+) site. 2 residues coordinate Mn(2+): aspartate 129 and histidine 136.

Belongs to the leguminous lectin family. In terms of assembly, tetramer of two alpha and two beta chains.

The protein is Lectin beta-1 and beta-2 chains of Lathyrus ochrus (Cyprus-vetch).